We begin with the raw amino-acid sequence, 70 residues long: Large ribosomal subunit protein bL31 (70 aa).

Residues Cys16, Cys18, Cys37, and Cys40 each contribute to the Zn(2+) site.

Belongs to the bacterial ribosomal protein bL31 family. Type A subfamily. In terms of assembly, part of the 50S ribosomal subunit. Zn(2+) is required as a cofactor.

Binds the 23S rRNA. The chain is Large ribosomal subunit protein bL31 from Shewanella woodyi (strain ATCC 51908 / MS32).